A 677-amino-acid chain; its full sequence is Methionine--tRNA ligase (677 aa).

The 'HIGH' region signature appears at 14–24 (PYANGSIHLGH). Zn(2+) contacts are provided by Cys145, Cys148, Cys158, and Cys161. A 'KMSKS' region motif is present at residues 331–335 (KMSKS). Lys334 contributes to the ATP binding site. Residues 575–677 (AFAAVDLRIA…SGAKPGQRVK (103 aa)) enclose the tRNA-binding domain.

It belongs to the class-I aminoacyl-tRNA synthetase family. MetG type 1 subfamily. As to quaternary structure, homodimer. Zn(2+) is required as a cofactor.

The protein localises to the cytoplasm. It carries out the reaction tRNA(Met) + L-methionine + ATP = L-methionyl-tRNA(Met) + AMP + diphosphate. Is required not only for elongation of protein synthesis but also for the initiation of all mRNA translation through initiator tRNA(fMet) aminoacylation. The protein is Methionine--tRNA ligase of Pseudomonas aeruginosa (strain LESB58).